The primary structure comprises 375 residues: Anhydro-N-acetylmuramic acid kinase (375 aa).

Gly13–Asp20 serves as a coordination point for ATP.

This sequence belongs to the anhydro-N-acetylmuramic acid kinase family.

It catalyses the reaction 1,6-anhydro-N-acetyl-beta-muramate + ATP + H2O = N-acetyl-D-muramate 6-phosphate + ADP + H(+). Its pathway is amino-sugar metabolism; 1,6-anhydro-N-acetylmuramate degradation. It participates in cell wall biogenesis; peptidoglycan recycling. Functionally, catalyzes the specific phosphorylation of 1,6-anhydro-N-acetylmuramic acid (anhMurNAc) with the simultaneous cleavage of the 1,6-anhydro ring, generating MurNAc-6-P. Is required for the utilization of anhMurNAc either imported from the medium or derived from its own cell wall murein, and thus plays a role in cell wall recycling. The polypeptide is Anhydro-N-acetylmuramic acid kinase (Pelagibacter ubique (strain HTCC1062)).